The sequence spans 109 residues: Large ribosomal subunit protein P1A (109 aa).

The segment covering 69-84 (APVAGGAAAPAAADGE) has biased composition (low complexity). Residues 69–109 (APVAGGAAAPAAADGEAPAEEKEEAKEEEESDEDMGFGLFD) form a disordered region. Over residues 94 to 103 (KEEEESDEDM) the composition is skewed to acidic residues.

Belongs to the eukaryotic ribosomal protein P1/P2 family. In terms of assembly, component of the large ribosomal subunit (LSU). Mature yeast ribosomes consist of a small (40S) and a large (60S) subunit. The 40S small subunit contains 1 molecule of ribosomal RNA (18S rRNA) and at least 33 different proteins. The large 60S subunit contains 3 rRNA molecules (25S, 5.8S and 5S rRNA) and at least 46 different proteins. The acidic ribosomal P-proteins form the stalk structure of the 60S subunit. They are organized as a pentameric complex in which uL10/P0 interacts with 2 heterodimers of P1 and P2 proteins.

The protein resides in the cytoplasm. Component of the ribosome, a large ribonucleoprotein complex responsible for the synthesis of proteins in the cell. The small ribosomal subunit (SSU) binds messenger RNAs (mRNAs) and translates the encoded message by selecting cognate aminoacyl-transfer RNA (tRNA) molecules. The large subunit (LSU) contains the ribosomal catalytic site termed the peptidyl transferase center (PTC), which catalyzes the formation of peptide bonds, thereby polymerizing the amino acids delivered by tRNAs into a polypeptide chain. The nascent polypeptides leave the ribosome through a tunnel in the LSU and interact with protein factors that function in enzymatic processing, targeting, and the membrane insertion of nascent chains at the exit of the ribosomal tunnel. This Schizosaccharomyces pombe (strain 972 / ATCC 24843) (Fission yeast) protein is Large ribosomal subunit protein P1A (rpp101).